Here is a 385-residue protein sequence, read N- to C-terminus: Benzoate O-methyltransferase (385 aa).

Position 18 (Y18) interacts with S-adenosyl-L-homocysteine. Q25 is a benzoate binding site. S-adenosyl-L-homocysteine-binding residues include C59, N64, D106, L107, S145, and Y146. W167 contacts benzoate. Positions 184, 270, 272, and 273 each coordinate Mg(2+).

This sequence belongs to the methyltransferase superfamily. Type-7 methyltransferase family. SABATH subfamily. Requires Mg(2+) as cofactor.

The catalysed reaction is benzoate + S-adenosyl-L-methionine = methyl benzoate + S-adenosyl-L-homocysteine. Methyltransferase involved in the biosynthesis of methyl benzoate in response to stresses. Utilizes exclusively benzoic acid (BA) as substrate. This Zea mays (Maize) protein is Benzoate O-methyltransferase (OMT8).